Here is a 480-residue protein sequence, read N- to C-terminus: MNYLPIFADLRQRPVLVVGGGEVATRKIDLLQRAGAEVKIVALALAEPLAAQHQAGQVEWLAQSFTPELLSGVFLVIAATDDAELNAAVFEAANQRHLLVNVVDDQPKCTFIFPSIVDRSPLVVAISSGGQAPVLARLLREKLESLLPASLGTMAEIAGSWRDRIKTRLHSMPARRRFWERLFVGRFASLVSAGQLEQAEGELQQQLVNQQDEQQLPAAARGEVALVGAGPGDAGLLTLRGLQVMQQADVVLYDHLVSADVLDLVRRDAERICVGKRASTHSLPQGEINQLLVKLAQEGKRVVRLKGGDPFIFGRGGEELQAVAQAGITFQVVPGVTAAAGVTAYAGIPLTHRDHAQSVIFITGHCRPDGDSLDWSTLARGRQTLAIYMGTMKAAEISQQLIAHGRSAQTPVAVISRGTRHDQQVQIGTLQELEHLARQAPTPALLVIGEVVDLHHQIAWFGQTTPTVPQDSRPAVVNLA.

The interval 1-203 (MNYLPIFADL…GQLEQAEGEL (203 aa)) is precorrin-2 dehydrogenase /sirohydrochlorin ferrochelatase. NAD(+) is bound by residues 22 to 23 (EV) and 43 to 44 (LA). A Phosphoserine modification is found at serine 128. The tract at residues 222–480 (GEVALVGAGP…DSRPAVVNLA (259 aa)) is uroporphyrinogen-III C-methyltransferase. Residue proline 231 coordinates S-adenosyl-L-methionine. The Proton acceptor role is filled by aspartate 254. Lysine 276 functions as the Proton donor in the catalytic mechanism. Residues 307–309 (GGD), isoleucine 312, 337–338 (TA), methionine 389, and glycine 418 each bind S-adenosyl-L-methionine.

This sequence in the N-terminal section; belongs to the precorrin-2 dehydrogenase / sirohydrochlorin ferrochelatase family. In the C-terminal section; belongs to the precorrin methyltransferase family.

The catalysed reaction is uroporphyrinogen III + 2 S-adenosyl-L-methionine = precorrin-2 + 2 S-adenosyl-L-homocysteine + H(+). It catalyses the reaction precorrin-2 + NAD(+) = sirohydrochlorin + NADH + 2 H(+). It carries out the reaction siroheme + 2 H(+) = sirohydrochlorin + Fe(2+). The protein operates within cofactor biosynthesis; adenosylcobalamin biosynthesis; precorrin-2 from uroporphyrinogen III: step 1/1. It participates in cofactor biosynthesis; adenosylcobalamin biosynthesis; sirohydrochlorin from precorrin-2: step 1/1. Its pathway is porphyrin-containing compound metabolism; siroheme biosynthesis; precorrin-2 from uroporphyrinogen III: step 1/1. It functions in the pathway porphyrin-containing compound metabolism; siroheme biosynthesis; siroheme from sirohydrochlorin: step 1/1. The protein operates within porphyrin-containing compound metabolism; siroheme biosynthesis; sirohydrochlorin from precorrin-2: step 1/1. In terms of biological role, multifunctional enzyme that catalyzes the SAM-dependent methylations of uroporphyrinogen III at position C-2 and C-7 to form precorrin-2 via precorrin-1. Then it catalyzes the NAD-dependent ring dehydrogenation of precorrin-2 to yield sirohydrochlorin. Finally, it catalyzes the ferrochelation of sirohydrochlorin to yield siroheme. This is Siroheme synthase 1 from Pectobacterium atrosepticum (strain SCRI 1043 / ATCC BAA-672) (Erwinia carotovora subsp. atroseptica).